Consider the following 425-residue polypeptide: Aspartic protease 2 (425 aa).

The N-terminal stretch at 1 to 16 (MRSILVLVALIGCIAA) is a signal peptide. Residues 72-421 (YLGEITIGTP…DIEKKRIGFA (350 aa)) form the Peptidase A1 domain. Residue Asp90 is part of the active site. An intrachain disulfide couples Cys103 to Cys145. N-linked (GlcNAc...) asparagine glycans are attached at residues Asn163, Asn197, and Asn304. Asp316 is a catalytic residue. Cys351 and Cys382 form a disulfide bridge. Asn354 and Asn365 each carry an N-linked (GlcNAc...) asparagine glycan.

Belongs to the peptidase A1 family. Cleaved into a mature form. In terms of tissue distribution, expressed in intestine, amphidal glands and excretory gland (at protein level).

Its subcellular location is the secreted. With respect to regulation, inhibited by pepstatin A. Its function is as follows. Aspartic protease which cleaves several human serum proteins including hemoglobin, fibrinogen and albumin. Appears to cleave preferentially between P1 (Ala, Leu, Val, Phe and Gly) and P1' (Ala and Leu) residues. The sequence is that of Aspartic protease 2 from Necator americanus (Human hookworm).